The following is a 621-amino-acid chain: Frizzled and smoothened-like protein H (621 aa).

The N-terminal stretch at 1-21 (MNLKFYNLIFFISFLICCIHG) is a signal peptide. The Extracellular portion of the chain corresponds to 22 to 246 (QRYLPVEGGK…VWNQIFKIND (225 aa)). The FZ domain occupies 27 to 166 (VEGGKCEKYI…IEWVKYNLTI (140 aa)). 2 disulfide bridges follow: Cys32/Cys103 and Cys46/Cys96. N-linked (GlcNAc...) asparagine glycosylation is found at Asn60, Asn107, Asn163, Asn176, and Asn206. A helical membrane pass occupies residues 247–267 (VLSSISLACTLILLFTFGILN). At 268–277 (PKLNRFDKKN) the chain is on the cytoplasmic side. The helical transmembrane segment at 278–298 (LFFIAGVFGMSVSGVLIAANG) threads the bilayer. Topologically, residues 299 to 318 (SEKTVCPTPERYAVNTDRVC) are extracellular. Residues 319–339 (VASGFLVHFSALFAILWWTIG) traverse the membrane as a helical segment. The Cytoplasmic portion of the chain corresponds to 340-359 (LADVYYGIKFVGKKIKIKVR). A helical membrane pass occupies residues 360 to 380 (YYLLATLTISLAFTLVPLGTG). Residues 381-400 (QYQAGLSNVMCFLKDEIYQS) are Extracellular-facing. Residues 401-421 (MTFFVPLGICLTMGTILMILV) traverse the membrane as a helical segment. Topologically, residues 422–464 (MREIYVIVKSNSTSSSFSSSSSKSKSKSKSSDSISYLKLQVKP) are cytoplasmic. The helical transmembrane segment at 465–485 (MLNIILFYFTFLYLFLFVRVI) threads the bilayer. Residues 486 to 520 (NSRYQEYEDSAIPYMLCLAKGGGDSCRLKGPSAGS) lie on the Extracellular side of the membrane. Residues 521 to 541 (LGYFAYCLRIYGIYLFIISFL) form a helical membrane-spanning segment. At 542–621 (SSRTIKIWKE…RNYNTDDDDL (80 aa)) the chain is on the cytoplasmic side. Positions 575–594 (FSSSKNTSTTQNSTLNNTES) are enriched in low complexity. The tract at residues 575–603 (FSSSKNTSTTQNSTLNNTESDTSKRGNSS) is disordered.

It belongs to the G-protein coupled receptor Fz/Smo family.

The protein localises to the membrane. The protein is Frizzled and smoothened-like protein H (fslH) of Dictyostelium discoideum (Social amoeba).